Consider the following 235-residue polypeptide: Large ribosomal subunit protein uL1 (235 aa).

This sequence belongs to the universal ribosomal protein uL1 family. As to quaternary structure, part of the 50S ribosomal subunit.

In terms of biological role, binds directly to 23S rRNA. The L1 stalk is quite mobile in the ribosome, and is involved in E site tRNA release. Its function is as follows. Protein L1 is also a translational repressor protein, it controls the translation of the L11 operon by binding to its mRNA. The protein is Large ribosomal subunit protein uL1 of Mycobacterium tuberculosis (strain ATCC 25177 / H37Ra).